Here is a 599-residue protein sequence, read N- to C-terminus: Nucleolar protein dnt1 (599 aa).

S174 carries the post-translational modification Phosphoserine. Disordered stretches follow at residues 210–262 (TQEE…PSRL) and 292–599 (DKSL…AALV). Residues 218-241 (QSFNSSLTPSQPTTYNRANFFSIN) show a composition bias toward polar residues. The segment covering 242–251 (DASSDSSSDA) has biased composition (low complexity). The segment covering 292-303 (DKSLRSSTREVS) has biased composition (basic and acidic residues). S306 is subject to Phosphoserine. Positions 307–320 (PNEDSVNDDSSSDV) are enriched in acidic residues. Residues 321–333 (SDEKETEAKHEIR) are compositionally biased toward basic and acidic residues. The span at 344–354 (SHPSTAVPSEN) shows a compositional bias: polar residues. The segment covering 364-380 (LSESSTTSISSSPSENS) has biased composition (low complexity). Polar residues predominate over residues 390–401 (DSPNKSLVNDNV). Residues 402–413 (SAKHDKESENGK) show a composition bias toward basic and acidic residues. Residues 421-431 (QTLVTTSTISA) show a composition bias toward polar residues. Positions 436 to 452 (PSDEIGSENDSDSDSDS) are enriched in acidic residues. Positions 456–480 (VPLSQLQKKSQQRNSVSHEIQNRGT) are enriched in polar residues. The segment covering 483-500 (SPKEPKAKPSTERPETHR) has biased composition (basic and acidic residues). Polar residues predominate over residues 501-514 (TLSYSRLSELSKTF). T513 is subject to Phosphothreonine. Basic and acidic residues-rich tracts occupy residues 533–542 (ESKEEGRSDE) and 558–574 (NSEKEDRSNPIPVEKRA).

In terms of processing, phosphorylated by clp1.

Its subcellular location is the cytoplasm. It is found in the nucleus. The protein localises to the nucleolus. It localises to the cytoskeleton. The protein resides in the spindle. Negatively regulates the septation initiation network (SIN) pathway, independently of the cdc14 phosphatase clp1. May also have a role in silencing rDNA transcription. Required for maintaining the exclusive nucleolus localization of nuc1. In Schizosaccharomyces pombe (strain 972 / ATCC 24843) (Fission yeast), this protein is Nucleolar protein dnt1 (dnt1).